We begin with the raw amino-acid sequence, 207 residues long: Small ribosomal subunit protein uS4c (207 aa).

Residues 22–51 (TQKNCTRDFPPGQHGPKKKGGGNQKTKESQ) form a disordered region. The 62-residue stretch at 97-158 (MRLDTIIFRL…NSQNFVKNLL (62 aa)) folds into the S4 RNA-binding domain.

It belongs to the universal ribosomal protein uS4 family. Part of the 30S ribosomal subunit. Contacts protein S5. The interaction surface between S4 and S5 is involved in control of translational fidelity.

It localises to the plastid. The protein localises to the chloroplast. In terms of biological role, one of the primary rRNA binding proteins, it binds directly to 16S rRNA where it nucleates assembly of the body of the 30S subunit. With S5 and S12 plays an important role in translational accuracy. The polypeptide is Small ribosomal subunit protein uS4c (rps4) (Chlorella vulgaris (Green alga)).